The following is a 90-amino-acid chain: Small ribosomal subunit protein bS20 (90 aa).

This sequence belongs to the bacterial ribosomal protein bS20 family.

In terms of biological role, binds directly to 16S ribosomal RNA. The sequence is that of Small ribosomal subunit protein bS20 from Roseiflexus sp. (strain RS-1).